The primary structure comprises 344 residues: N-acetyl-gamma-glutamyl-phosphate reductase (344 aa).

Residue cysteine 150 is part of the active site.

It belongs to the NAGSA dehydrogenase family. Type 1 subfamily.

The protein resides in the cytoplasm. The enzyme catalyses N-acetyl-L-glutamate 5-semialdehyde + phosphate + NADP(+) = N-acetyl-L-glutamyl 5-phosphate + NADPH + H(+). Its pathway is amino-acid biosynthesis; L-arginine biosynthesis; N(2)-acetyl-L-ornithine from L-glutamate: step 3/4. Functionally, catalyzes the NADPH-dependent reduction of N-acetyl-5-glutamyl phosphate to yield N-acetyl-L-glutamate 5-semialdehyde. The protein is N-acetyl-gamma-glutamyl-phosphate reductase of Pseudomonas aeruginosa (strain UCBPP-PA14).